A 444-amino-acid chain; its full sequence is Ribosomal protein uS12 methylthiotransferase RimO (444 aa).

One can recognise an MTTase N-terminal domain in the interval 4–118; it reads IKYGVVSLGC…LSDAIKKSIE (115 aa). Cys13, Cys48, Cys81, Cys155, Cys159, and Cys162 together coordinate [4Fe-4S] cluster. The Radical SAM core domain maps to 141–373; that stretch reads TTQKHYAYLR…MQRDIVKSIN (233 aa). One can recognise a TRAM domain in the interval 374–440; the sequence is ADKVNKVYKV…EYDLIGVVCD (67 aa).

Belongs to the methylthiotransferase family. RimO subfamily. [4Fe-4S] cluster serves as cofactor.

It is found in the cytoplasm. It carries out the reaction L-aspartate(89)-[ribosomal protein uS12]-hydrogen + (sulfur carrier)-SH + AH2 + 2 S-adenosyl-L-methionine = 3-methylsulfanyl-L-aspartate(89)-[ribosomal protein uS12]-hydrogen + (sulfur carrier)-H + 5'-deoxyadenosine + L-methionine + A + S-adenosyl-L-homocysteine + 2 H(+). Functionally, catalyzes the methylthiolation of an aspartic acid residue of ribosomal protein uS12. The sequence is that of Ribosomal protein uS12 methylthiotransferase RimO from Clostridium tetani (strain Massachusetts / E88).